The primary structure comprises 599 residues: Aspartate--tRNA ligase (599 aa).

Residue Glu-180 participates in L-aspartate binding. Residues 204 to 207 (QIFK) form an aspartate region. L-aspartate is bound at residue Arg-226. ATP contacts are provided by residues 226 to 228 (RDE) and Gln-235. An L-aspartate-binding site is contributed by His-454. ATP is bound at residue Glu-488. Arg-495 serves as a coordination point for L-aspartate. An ATP-binding site is contributed by 540-543 (GLDR).

The protein belongs to the class-II aminoacyl-tRNA synthetase family. Type 1 subfamily. Homodimer.

The protein localises to the cytoplasm. The catalysed reaction is tRNA(Asp) + L-aspartate + ATP = L-aspartyl-tRNA(Asp) + AMP + diphosphate. In terms of biological role, catalyzes the attachment of L-aspartate to tRNA(Asp) in a two-step reaction: L-aspartate is first activated by ATP to form Asp-AMP and then transferred to the acceptor end of tRNA(Asp). The protein is Aspartate--tRNA ligase of Clostridium botulinum (strain Eklund 17B / Type B).